A 424-amino-acid polypeptide reads, in one-letter code: Serpin A11 (424 aa).

The signal sequence occupies residues 1 to 21 (MGPVWLWLWLLVAEVLLPVHC). N-linked (GlcNAc...) asparagine glycosylation is found at Asn-108, Asn-171, Asn-352, and Asn-387.

It belongs to the serpin family.

Its subcellular location is the secreted. In Mus musculus (Mouse), this protein is Serpin A11 (Serpina11).